Consider the following 338-residue polypeptide: Tetraacyldisaccharide 4'-kinase (338 aa).

53–60 contributes to the ATP binding site; sequence TVGGSGKT.

Belongs to the LpxK family.

The enzyme catalyses a lipid A disaccharide + ATP = a lipid IVA + ADP + H(+). It participates in glycolipid biosynthesis; lipid IV(A) biosynthesis; lipid IV(A) from (3R)-3-hydroxytetradecanoyl-[acyl-carrier-protein] and UDP-N-acetyl-alpha-D-glucosamine: step 6/6. Its function is as follows. Transfers the gamma-phosphate of ATP to the 4'-position of a tetraacyldisaccharide 1-phosphate intermediate (termed DS-1-P) to form tetraacyldisaccharide 1,4'-bis-phosphate (lipid IVA). This Azorhizobium caulinodans (strain ATCC 43989 / DSM 5975 / JCM 20966 / LMG 6465 / NBRC 14845 / NCIMB 13405 / ORS 571) protein is Tetraacyldisaccharide 4'-kinase.